We begin with the raw amino-acid sequence, 421 residues long: Testin (421 aa).

The PET domain maps to 92–199 (MILTNPVAAK…GDVKLPQEMD (108 aa)). 3 consecutive LIM zinc-binding domains span residues 234 to 297 (YSCY…CDSE), 299 to 359 (PRCA…NHAV), and 362 to 421 (QGCH…KMMS).

Belongs to the prickle / espinas / testin family. Interacts via LIM domain 1 with ZYX. Interacts (via LIM domain 3) with ENAH and VASP. Interacts with ALKBH4, talin, actin, alpha-actinin, GRIP1 and PXN. Interacts (via LIM domain 2) with ACTL7A (via N-terminus). Heterodimer with ACTL7A; the heterodimer interacts with ENAH to form a heterotrimer.

It localises to the cytoplasm. Its subcellular location is the cell junction. The protein resides in the focal adhesion. In terms of biological role, scaffold protein that may play a role in cell adhesion, cell spreading and in the reorganization of the actin cytoskeleton. Plays a role in the regulation of cell proliferation. May act as a tumor suppressor. This is Testin (TES) from Loxodonta africana (African elephant).